A 182-amino-acid chain; its full sequence is 5-formyltetrahydrofolate cyclo-ligase (182 aa).

The segment at 1–21 (MIRQRRRALTPEQQQEMGQQA) is disordered. Residues 11–21 (PEQQQEMGQQA) show a composition bias toward polar residues. ATP contacts are provided by residues 128 to 135 (GMGGGFYD) and aspartate 167.

This sequence belongs to the 5-formyltetrahydrofolate cyclo-ligase family.

The catalysed reaction is (6S)-5-formyl-5,6,7,8-tetrahydrofolate + ATP = (6R)-5,10-methenyltetrahydrofolate + ADP + phosphate. It participates in one-carbon metabolism; tetrahydrofolate interconversion. In terms of biological role, involved in the removal of 5-formyltetrahydrofolate. In vitro, it is a potent inhibitor of various folate-dependent enzymes in the C1 metabolism network and in vivo it might function as a folate storage. 5-formyltetrahydrofolate is also used as an antifolate rescue agent in cancer chemotherapy. Catalyzes the irreversible ATP-dependent transformation of 5-formyltetrahydrofolate (5-CHO-THF) to form 5,10-methenyltetrahydrofolate (5,10-CH=THF). The reverse reaction is catalyzed by the serine hydroxymethyltransferase GlyA (SHMT). This chain is 5-formyltetrahydrofolate cyclo-ligase (ygfA), found in Escherichia coli O157:H7.